Consider the following 236-residue polypeptide: tRNA (guanine-N(7)-)-methyltransferase (236 aa).

S-adenosyl-L-methionine contacts are provided by Asp-35, Glu-60, Asn-87, and Asp-113. The active site involves Asp-113. 2 residues coordinate substrate: Lys-117 and Asp-149.

Belongs to the class I-like SAM-binding methyltransferase superfamily. TrmB family.

The enzyme catalyses guanosine(46) in tRNA + S-adenosyl-L-methionine = N(7)-methylguanosine(46) in tRNA + S-adenosyl-L-homocysteine. It participates in tRNA modification; N(7)-methylguanine-tRNA biosynthesis. Catalyzes the formation of N(7)-methylguanine at position 46 (m7G46) in tRNA. The chain is tRNA (guanine-N(7)-)-methyltransferase from Parasynechococcus marenigrum (strain WH8102).